The sequence spans 433 residues: Elongation factor 1-alpha (433 aa).

The tr-type G domain occupies 5–220 (KPHINVVFIG…ALDMLKPPQL (216 aa)). The tract at residues 14 to 21 (GHVDHGKS) is G1. 14–21 (GHVDHGKS) is a GTP binding site. Ser-21 is a binding site for Mg(2+). Residues 70-74 (GVTID) form a G2 region. Residues 91–94 (DAPG) are G3. Residues 91 to 95 (DAPGH) and 146 to 149 (NKMD) contribute to the GTP site. Residues 146-149 (NKMD) are G4. The interval 186–188 (ASF) is G5.

Belongs to the TRAFAC class translation factor GTPase superfamily. Classic translation factor GTPase family. EF-Tu/EF-1A subfamily.

It is found in the cytoplasm. The catalysed reaction is GTP + H2O = GDP + phosphate + H(+). GTP hydrolase that promotes the GTP-dependent binding of aminoacyl-tRNA to the A-site of ribosomes during protein biosynthesis. The chain is Elongation factor 1-alpha from Nanoarchaeum equitans (strain Kin4-M).